A 184-amino-acid polypeptide reads, in one-letter code: ATP synthase subunit b, chloroplastic (184 aa).

Residues 27 to 49 (LATNPINLSVVFGVLIFFGKGVL) traverse the membrane as a helical segment.

The protein belongs to the ATPase B chain family. In terms of assembly, F-type ATPases have 2 components, F(1) - the catalytic core - and F(0) - the membrane proton channel. F(1) has five subunits: alpha(3), beta(3), gamma(1), delta(1), epsilon(1). F(0) has four main subunits: a(1), b(1), b'(1) and c(10-14). The alpha and beta chains form an alternating ring which encloses part of the gamma chain. F(1) is attached to F(0) by a central stalk formed by the gamma and epsilon chains, while a peripheral stalk is formed by the delta, b and b' chains.

The protein localises to the plastid. It localises to the chloroplast thylakoid membrane. In terms of biological role, f(1)F(0) ATP synthase produces ATP from ADP in the presence of a proton or sodium gradient. F-type ATPases consist of two structural domains, F(1) containing the extramembraneous catalytic core and F(0) containing the membrane proton channel, linked together by a central stalk and a peripheral stalk. During catalysis, ATP synthesis in the catalytic domain of F(1) is coupled via a rotary mechanism of the central stalk subunits to proton translocation. Functionally, component of the F(0) channel, it forms part of the peripheral stalk, linking F(1) to F(0). This chain is ATP synthase subunit b, chloroplastic, found in Barbarea verna (Land cress).